The primary structure comprises 880 residues: Valine--tRNA ligase (880 aa).

The short motif at 49–59 (PNVTGKLHLGH) is the 'HIGH' region element. The short motif at 525–529 (KMSKS) is the 'KMSKS' region element. Residue K528 participates in ATP binding. Residues 809 to 880 (LEGLINIDEE…VEKRIAELKN (72 aa)) are a coiled coil.

Belongs to the class-I aminoacyl-tRNA synthetase family. ValS type 1 subfamily. Monomer.

Its subcellular location is the cytoplasm. The catalysed reaction is tRNA(Val) + L-valine + ATP = L-valyl-tRNA(Val) + AMP + diphosphate. In terms of biological role, catalyzes the attachment of valine to tRNA(Val). As ValRS can inadvertently accommodate and process structurally similar amino acids such as threonine, to avoid such errors, it has a 'posttransfer' editing activity that hydrolyzes mischarged Thr-tRNA(Val) in a tRNA-dependent manner. This chain is Valine--tRNA ligase, found in Bacillus licheniformis (strain ATCC 14580 / DSM 13 / JCM 2505 / CCUG 7422 / NBRC 12200 / NCIMB 9375 / NCTC 10341 / NRRL NRS-1264 / Gibson 46).